Reading from the N-terminus, the 356-residue chain is Cyanide hydratase (356 aa).

Residues 8-287 enclose the CN hydrolase domain; the sequence is YKAAAVNAEP…EGLLFVDIDL (280 aa). Glutamate 48 functions as the Proton acceptor in the catalytic mechanism. Residue lysine 130 is part of the active site. Cysteine 165 functions as the Nucleophile in the catalytic mechanism.

It belongs to the carbon-nitrogen hydrolase superfamily. Nitrilase family. Oligomer of dimers, forming left-handed helical fibers.

It catalyses the reaction formamide = hydrogen cyanide + H2O. Its function is as follows. Catalyzes the hydration of cyanide to formamide. Degradation of cyanide may be important for plant pathogenic fungi in infection of cyanogenic plants. Can also transform some nitriles like 2-cyanopyridine and fumaronitrile. The sequence is that of Cyanide hydratase from Aspergillus niger.